The chain runs to 200 residues: NADH-quinone oxidoreductase subunit C (200 aa).

This sequence belongs to the complex I 30 kDa subunit family. In terms of assembly, NDH-1 is composed of 14 different subunits. Subunits NuoB, C, D, E, F, and G constitute the peripheral sector of the complex.

Its subcellular location is the cell inner membrane. It catalyses the reaction a quinone + NADH + 5 H(+)(in) = a quinol + NAD(+) + 4 H(+)(out). NDH-1 shuttles electrons from NADH, via FMN and iron-sulfur (Fe-S) centers, to quinones in the respiratory chain. The immediate electron acceptor for the enzyme in this species is believed to be ubiquinone. Couples the redox reaction to proton translocation (for every two electrons transferred, four hydrogen ions are translocated across the cytoplasmic membrane), and thus conserves the redox energy in a proton gradient. The polypeptide is NADH-quinone oxidoreductase subunit C (Maricaulis maris (strain MCS10) (Caulobacter maris)).